Reading from the N-terminus, the 207-residue chain is BON1-associated protein 2 (207 aa).

One can recognise a C2 domain in the interval 1–112 (MSYSTFKRSL…GFAPQGHLNF (112 aa)).

In terms of assembly, interacts with BON1, BON2 and BON3. In terms of tissue distribution, expressed in roots, leaves, stems and flowers.

It is found in the membrane. Its function is as follows. Negative regulator of cell death and defense responses. Exhibits calcium-dependent phospholipid binding properties. In Arabidopsis thaliana (Mouse-ear cress), this protein is BON1-associated protein 2 (BAP2).